Here is a 235-residue protein sequence, read N- to C-terminus: Serine/arginine-rich splicing factor 7 (235 aa).

The RRM domain maps to 11 to 84 (TKVYVGNLGT…SRVRVELSTG (74 aa)). Lys24 carries the post-translational modification N6-acetyllysine; alternate. Lys24 participates in a covalent cross-link: Glycyl lysine isopeptide (Lys-Gly) (interchain with G-Cter in SUMO2); alternate. Ser32 is subject to Phosphoserine. Residues 81–98 (LSTGMPRRSRFDRPPARR) form a sufficient for interaction with NXF1 region. The CCHC-type zinc-finger motif lies at 104–120 (DRCYECGEKGHYAYDCH). Positions 123 to 180 (SRRRRSRSRSRSHSRSRGRRYSRSRSRSRGRRSRSASPRRSRSVSLRRSRSASLRRSR) are enriched in basic residues. The tract at residues 123–235 (SRRRRSRSRS…RRSASPERVD (113 aa)) is disordered. 4 consecutive repeat copies span residues 153–160 (RRSRSASP), 161–168 (RRSRSVSL), 169–176 (RRSRSASL), and 177–184 (RRSRSGSI). Residues 153 to 223 (RRSRSASPRR…SPKRSRSPSG (71 aa)) are 6 X 8 AA repeats of R-R-S-R-S-X-S-X. Phosphoserine is present on residues Ser163, Ser165, and Ser167. Residues Ser181, Ser183, Ser189, Ser191, and Ser193 each carry the phosphoserine modification. A compositionally biased stretch (basic residues) spans 187 to 219 (SRSRSRSRSRSRSLSRPRSSRSKSRSPSPKRSR). The stretch at 208–215 (SKSRSPSP) is one 5; approximate repeat. The stretch at 216–223 (KRSRSPSG) is one 6; approximate repeat. Ser228 and Ser230 each carry phosphoserine.

The protein belongs to the splicing factor SR family. In terms of assembly, found in large molecular weight complexes containing CCNL1 and the p110 isoforms of either CDC2L1 or CDC2L2. Interacts with CCNL2 and CPSF6. Interacts with NXF1. Interacts with YTHDC1. In terms of processing, extensively phosphorylated on serine residues in the RS domain.

It localises to the nucleus. The protein resides in the cytoplasm. Required for pre-mRNA splicing. Represses the splicing of MAPT/Tau exon 10. May function as export adapter involved in mRNA nuclear export such as of histone H2A. Binds mRNA which is thought to be transferred to the NXF1-NXT1 heterodimer for export (TAP/NXF1 pathway); enhances NXF1-NXT1 RNA-binding activity. RNA-binding is semi-sequence specific. This Bos taurus (Bovine) protein is Serine/arginine-rich splicing factor 7 (SRSF7).